Reading from the N-terminus, the 201-residue chain is Dephospho-CoA kinase (201 aa).

Residues 6-201 (VMGLTGSIGM…RAIREKNPRG (196 aa)) form the DPCK domain. 14-19 (GMGKSA) contributes to the ATP binding site.

The protein belongs to the CoaE family.

It is found in the cytoplasm. It catalyses the reaction 3'-dephospho-CoA + ATP = ADP + CoA + H(+). The protein operates within cofactor biosynthesis; coenzyme A biosynthesis; CoA from (R)-pantothenate: step 5/5. Functionally, catalyzes the phosphorylation of the 3'-hydroxyl group of dephosphocoenzyme A to form coenzyme A. The protein is Dephospho-CoA kinase of Novosphingobium aromaticivorans (strain ATCC 700278 / DSM 12444 / CCUG 56034 / CIP 105152 / NBRC 16084 / F199).